Reading from the N-terminus, the 168-residue chain is Troponin I, cardiac muscle (168 aa).

Positions 128–147 (VRKDDAEKESREVGDWRKNV) are enriched in basic and acidic residues. A disordered region spans residues 128–168 (VRKDDAEKESREVGDWRKNVDALSGMEGRKKKFEAPGGGQG).

It belongs to the troponin I family. Binds to actin and tropomyosin.

Troponin I is the inhibitory subunit of troponin, the thin filament regulatory complex which confers calcium-sensitivity to striated muscle actomyosin ATPase activity. This Gallus gallus (Chicken) protein is Troponin I, cardiac muscle (TNNI3).